Consider the following 185-residue polypeptide: Bcl-2-modifying factor (185 aa).

The segment at 1 to 28 is disordered; the sequence is MEPPQCVEELEDDVFQPEDGEPGTQPGS. A compositionally biased stretch (acidic residues) spans 8 to 21; it reads EELEDDVFQPEDGE. The interval 67–75 is interaction with DLC2; the sequence is DKATQTLSP. The BH3 motif lies at 134–148; sequence IARKLQCIADQFHRL.

It belongs to the Bcl-2 family. Interacts with MCL1, BCL2, BCL2L1/BCL-Xl, BCL2A1 and BCL2L2/BCL-w. Interacts with the myosin V actin motor complex through its binding to DLC2.

May play a role in apoptosis. This chain is Bcl-2-modifying factor (Bmf), found in Rattus norvegicus (Rat).